A 723-amino-acid polypeptide reads, in one-letter code: Lim and transglutaminase domain protein ltd-1 (723 aa).

In terms of domain architecture, LIM zinc-binding spans 5-72 (QHCNRCGKQV…SNHVPIAGPH (68 aa)).

The protein belongs to the transglutaminase-like superfamily. In terms of tissue distribution, expressed in the Y and U rectal epithelial cells, in marginal cells of the terminal bulb and isthmus of the pharynx (at protein level).

The protein resides in the cytoplasm. The protein localises to the cytoskeleton. In terms of biological role, cytoskeleton-associated protein. May play a role in hypodermal cell development. This is Lim and transglutaminase domain protein ltd-1 from Caenorhabditis elegans.